The sequence spans 333 residues: Autoinducer 2 import system permease protein LsrC (333 aa).

The next 9 membrane-spanning stretches (helical) occupy residues 14 to 34, 39 to 59, 70 to 90, 93 to 113, 115 to 135, 157 to 177, 206 to 226, 252 to 272, and 284 to 304; these read LIAI…YFSL, LVFS…LVML, IAGL…SLSV, LLTL…VTWL, IPAI…MLLL, LNIS…AWIL, IQII…IVFA, GISL…AFFL, and LPAW…LIFD.

This sequence belongs to the binding-protein-dependent transport system permease family. AraH/RbsC subfamily. In terms of assembly, the complex is composed of two ATP-binding proteins (LsrA), two transmembrane proteins (LsrC and LsrD) and a solute-binding protein (LsrB).

Its subcellular location is the cell inner membrane. Its function is as follows. Part of the ABC transporter complex LsrABCD involved in autoinducer 2 (AI-2) import. Probably responsible for the translocation of the substrate across the membrane. The polypeptide is Autoinducer 2 import system permease protein LsrC (lsrC) (Photorhabdus laumondii subsp. laumondii (strain DSM 15139 / CIP 105565 / TT01) (Photorhabdus luminescens subsp. laumondii)).